A 659-amino-acid polypeptide reads, in one-letter code: Interferon-induced GTP-binding protein Mx3 (659 aa).

One can recognise a Dynamin-type G domain in the interval 65-338 (DLALPAIAVI…LISHICKSLP (274 aa)). The segment at 75–82 (GDQSSGKS) is G1 motif. 75-82 (GDQSSGKS) contributes to the GTP binding site. The interval 100 to 102 (VTR) is G2 motif. The tract at residues 176-179 (DLPG) is G3 motif. GTP contacts are provided by residues 176-180 (DLPGI) and 245-248 (TKPD). Positions 245-248 (TKPD) are G4 motif. Residues 277 to 280 (KCRG) are G5 motif. The disordered stretch occupies residues 547–568 (EAEEEERKHGKSRSAQSPNLQT). The segment covering 559–568 (RSAQSPNLQT) has biased composition (polar residues). Positions 571 to 659 (MDEIFQHLNA…AQRRLAKFPG (89 aa)) constitute a GED domain.

Belongs to the TRAFAC class dynamin-like GTPase superfamily. Dynamin/Fzo/YdjA family.

The protein localises to the cytoplasm. Does not show activity against influenza virus or VSV; although it only differs from Mx2 by 8 positions. The sequence is that of Interferon-induced GTP-binding protein Mx3 (Mx3) from Rattus norvegicus (Rat).